The chain runs to 79 residues: Conotoxin Leo-O4 (79 aa).

The first 22 residues, 1-22, serve as a signal peptide directing secretion; the sequence is MKLTCMMLVAVLFLTAWTFVTA. Positions 23–51 are excised as a propeptide; sequence NVSRNGLENLFPEERHEMMNPNAAKLNNR. 3 disulfides stabilise this stretch: C53/C70, C60/C74, and C69/C78.

It belongs to the conotoxin O1 superfamily. In terms of tissue distribution, expressed by the venom duct.

The protein localises to the secreted. This Conus leopardus (Leopard cone) protein is Conotoxin Leo-O4.